The following is a 503-amino-acid chain: Pre-glycoprotein polyprotein GP complex (503 aa).

The N-myristoyl glycine; by host moiety is linked to residue Gly-2. Over 2–17 (GQIVTLIQSIPEVLQE) the chain is Extracellular. A helical transmembrane segment spans residues 18-33 (VFNVALIIVSVLCIVK). The Cytoplasmic portion of the chain corresponds to 34–58 (GFVNLMRCGLFQLVTFLILSGRSCD). Cys-57 serves as a coordination point for Zn(2+). Topologically, residues 59-446 (SMMIDRRHNL…QGKTPLALTD (388 aa)) are extracellular. Disulfide bonds link Cys-86/Cys-248, Cys-293/Cys-306, Cys-315/Cys-324, and Cys-378/Cys-399. N-linked (GlcNAc...) asparagine; by host glycosylation is found at Asn-89, Asn-111, Asn-181, and Asn-241. Asn-379, Asn-387, Asn-404, and Asn-409 each carry an N-linked (GlcNAc...) asparagine; by host glycan. A helical transmembrane segment spans residues 447-467 (ICFWSLVFYTITVFLHIVGIP). The Cytoplasmic segment spans residues 468-503 (THRHIIGDGCPKPHRITRNSLCSCGYYKYQRNLTNG). His-469, His-471, Cys-477, His-481, Cys-489, and Cys-491 together coordinate Zn(2+).

It belongs to the arenaviridae GPC protein family. Interacts with glycoprotein G2. Part of the GP complex (GP-C) together with glycoprotein G1 and glycoprotein G2. The GP-complex interacts with protein Z, which interacts with ribonucleocapsid; these interactions may induce virion budding. As to quaternary structure, homotrimer; disulfide-linked. In pre-fusion state, G1 homotrimers bind G2 homotrimers via ionic interactions. Part of the GP complex (GP-C) together with glycoprotein G2 and the stable signal peptide. The GP-complex interacts with protein Z, which interacts with ribonucleocapsid; these interactions may induce virion budding. In terms of assembly, homotrimer. Interacts with the stable signal peptide. In pre-fusion state, G2 homotrimers bind G1 homotrimers via ionic interactions. Part of the GP complex (GP-C) together with glycoprotein G1 and the stable signal peptide. Acidification in the endosome triggers rearrangements, which ultimately leads to a 6 helix bundle formed by the two heptad repeat domains (HR1 and HR2) in post-fusion state. The GP-complex interacts with protein Z, which interacts with ribonucleocapsid; these interactions may induce virion budding. In terms of processing, specific enzymatic cleavages in vivo yield mature proteins. GP-C polyprotein is cleaved in the endoplasmic reticulum by the host protease MBTPS1. Only cleaved glycoprotein is incorporated into virions. The SSP remains stably associated with the GP complex following cleavage by signal peptidase and plays crucial roles in the trafficking of GP through the secretory pathway. Post-translationally, myristoylation is necessary for GP2-mediated fusion activity.

The protein resides in the virion membrane. It is found in the host endoplasmic reticulum membrane. Its subcellular location is the host Golgi apparatus membrane. It localises to the host cell membrane. Its function is as follows. Functions as a cleaved signal peptide that is retained as the third component of the GP complex (GP-C). Helps to stabilize the spike complex in its native conformation. The SSP is required for efficient glycoprotein expression, post-translational maturation cleavage of G1 and G2, glycoprotein transport to the cell surface plasma membrane, formation of infectious virus particles, and acid pH-dependent glycoprotein-mediated cell fusion. Forms the virion spikes together with glycoprotein G2. The glycoprotein spike trimers are connected to the underlying matrix. Interacts with the host receptor leading to virus endocytosis. Functionally, forms the virion spikes together with glycoprotein G1. The glycoprotein spike trimers are connected to the underlying matrix. Class I viral fusion protein that directs fusion of viral and host endosomal membranes, leading to delivery of the nucleocapsid into the cytoplasm. Membrane fusion is mediated by irreversible conformational changes induced by acidification. The sequence is that of Pre-glycoprotein polyprotein GP complex from Cavia cutleri (Guinea pig).